The chain runs to 339 residues: DnaJ homolog subfamily C member 22 (339 aa).

Residues 4–50 (GLLMTYVLWALGGPVGLHHLYLGRDSHALLWMLTLGGGGLGWLWEFW) enclose the TM2 domain. The next 7 helical transmembrane spans lie at 5–25 (LLMT…HLYL), 30–50 (HALL…WEFW), 81–101 (FASQ…SLSS), 105–125 (FYIV…AAVG), 135–155 (LGAA…ILPI), 185–205 (VGLA…YNTA), and 218–238 (FLSW…VLLL). The region spanning 277–339 (LAHQVLGVPE…LSQPKKPRAS (63 aa)) is the J domain.

It localises to the membrane. Its function is as follows. May function as a co-chaperone. This chain is DnaJ homolog subfamily C member 22 (Dnajc22), found in Mus musculus (Mouse).